A 394-amino-acid polypeptide reads, in one-letter code: Phosphoglycerate kinase (394 aa).

Substrate-binding positions include 21 to 23 (DLN), 59 to 62 (HLGR), arginine 117, and arginine 150. Residues lysine 201, glutamate 318, and 344 to 347 (GGDT) each bind ATP.

It belongs to the phosphoglycerate kinase family. Monomer.

Its subcellular location is the cytoplasm. It catalyses the reaction (2R)-3-phosphoglycerate + ATP = (2R)-3-phospho-glyceroyl phosphate + ADP. Its pathway is carbohydrate degradation; glycolysis; pyruvate from D-glyceraldehyde 3-phosphate: step 2/5. The polypeptide is Phosphoglycerate kinase (Blochmanniella pennsylvanica (strain BPEN)).